Here is a 162-residue protein sequence, read N- to C-terminus: Protein snakeskin (162 aa).

Over 2 to 6 (VSVET) the chain is Cytoplasmic. A helical membrane pass occupies residues 7–27 (VGSIFIKALKLIINLVIIFLY). The Extracellular segment spans residues 28-53 (RWGDGGEFLGIGGTWNLNEEKSADAE). A helical transmembrane segment spans residues 54–74 (IVASGVMVGFLIYTGCHTIAF). The Cytoplasmic segment spans residues 75–88 (AFGTTKHKGELCDT). The helical transmembrane segment at 89–109 (IMNVVGCIMWIAVGGVALHYW) threads the bilayer. At 110 to 128 (KGYMSDEGFLYVNSERQVG) the chain is on the extracellular side. Residues 129–149 (IAMGSLCVIEGALYLLDTVLA) form a helical membrane-spanning segment. At 150 to 162 (CIHYSKGDTDYTQ) the chain is on the cytoplasmic side.

As to quaternary structure, forms a complex with Tsp2A and mesh. Interacts with mesh; the interaction may be necessary for the localization of both proteins to the cell apicolateral region.

The protein resides in the apicolateral cell membrane. It localises to the cell junction. The protein localises to the septate junction. Required for assembly of smooth septate junctions (sSJs), together with mesh and Tsp2A. May be important for barrier function of the midgut epithelium. The chain is Protein snakeskin from Drosophila melanogaster (Fruit fly).